A 96-amino-acid polypeptide reads, in one-letter code: MEQAPEDQGPQREPHNEWTLELLEELKNEAVRHFPRIWLHGLGQHIYETYGDTWAGVEAIIRILQQLLFIHFRIGCRHSRIGVTRQRRARNGASRS.

Residues 1 to 42 form a homooligomerization region; sequence MEQAPEDQGPQREPHNEWTLELLEELKNEAVRHFPRIWLHGL. Phosphoserine; by host occurs at positions 79, 94, and 96.

The protein belongs to the HIV-1 VPR protein family. As to quaternary structure, homooligomer, may form homodimer. Interacts with p6-gag region of the Pr55 Gag precursor protein through a (Leu-X-X)4 motif near the C-terminus of the P6gag protein. Interacts with host UNG. May interact with host RAD23A/HHR23A. Interacts with host VPRBP/DCAF1, leading to hijack the CUL4A-RBX1-DDB1-DCAF1/VPRBP complex, mediating ubiquitination of host proteins such as TERT and ZGPAT and arrest of the cell cycle in G2 phase. Post-translationally, phosphorylated on several residues by host. These phosphorylations regulate VPR activity for the nuclear import of the HIV-1 pre-integration complex.

Its subcellular location is the virion. It localises to the host nucleus. The protein resides in the host extracellular space. Functionally, during virus entry, plays a role in the transport of the viral pre-integration (PIC) complex to the host nucleus. This function is crucial for viral infection of non-dividing macrophages. May act directly at the nuclear pore complex, by binding nucleoporins phenylalanine-glycine (FG)-repeat regions. In terms of biological role, during virus replication, may deplete host UNG protein, and incude G2-M cell cycle arrest. Acts by targeting specific host proteins for degradation by the 26S proteasome, through association with the cellular CUL4A-DDB1 E3 ligase complex by direct interaction with host VPRPB/DCAF-1. Cell cycle arrest reportedly occurs within hours of infection and is not blocked by antiviral agents, suggesting that it is initiated by the VPR carried into the virion. Additionally, VPR induces apoptosis in a cell cycle dependent manner suggesting that these two effects are mechanistically linked. Detected in the serum and cerebrospinal fluid of AIDS patient, VPR may also induce cell death to bystander cells. The sequence is that of Protein Vpr from Homo sapiens (Human).